The following is a 157-amino-acid chain: SsrA-binding protein (157 aa).

The interval 133–157 (LHDKRESEKKRDWGREKGRLLRARG) is disordered. Over residues 135 to 151 (DKRESEKKRDWGREKGR) the composition is skewed to basic and acidic residues.

It belongs to the SmpB family.

It localises to the cytoplasm. In terms of biological role, required for rescue of stalled ribosomes mediated by trans-translation. Binds to transfer-messenger RNA (tmRNA), required for stable association of tmRNA with ribosomes. tmRNA and SmpB together mimic tRNA shape, replacing the anticodon stem-loop with SmpB. tmRNA is encoded by the ssrA gene; the 2 termini fold to resemble tRNA(Ala) and it encodes a 'tag peptide', a short internal open reading frame. During trans-translation Ala-aminoacylated tmRNA acts like a tRNA, entering the A-site of stalled ribosomes, displacing the stalled mRNA. The ribosome then switches to translate the ORF on the tmRNA; the nascent peptide is terminated with the 'tag peptide' encoded by the tmRNA and targeted for degradation. The ribosome is freed to recommence translation, which seems to be the essential function of trans-translation. This Bradyrhizobium sp. (strain ORS 278) protein is SsrA-binding protein.